The primary structure comprises 96 residues: Small ribosomal subunit protein bS18 (96 aa).

The segment covering 1 to 22 (MYKDIDSHQRDSRTDGHQDGFK) has biased composition (basic and acidic residues). Residues 1 to 25 (MYKDIDSHQRDSRTDGHQDGFKKNP) are disordered.

This sequence belongs to the bacterial ribosomal protein bS18 family. In terms of assembly, part of the 30S ribosomal subunit. Forms a tight heterodimer with protein bS6.

Its function is as follows. Binds as a heterodimer with protein bS6 to the central domain of the 16S rRNA, where it helps stabilize the platform of the 30S subunit. The protein is Small ribosomal subunit protein bS18 of Borrelia duttonii (strain Ly).